A 692-amino-acid polypeptide reads, in one-letter code: Transforming growth factor beta activator LRRC33 (692 aa).

The signal sequence occupies residues 1-24; sequence MEFLPLWLCLGFHFLIVEWRSGRG. At 25 to 650 the chain is on the extracellular side; the sequence is TATAASQGGC…CKWGQVDTGL (626 aa). The LRRNT domain maps to 29–56; it reads ASQGGCKVVDRVADCRSLNLASVPSGLP. LRR repeat units follow at residues 58 to 79, 82 to 103, 106 to 127, 133 to 155, 158 to 179, 182 to 203, 206 to 227, 228 to 239, 251 to 272, and 273 to 294; these read HSRMLVLDANPLRVLWNHSLQA, RLEDLSLHSCHLDRISHWAFHE, HLQNLVLADNRLSENYKESATA, RLRRLDLSGNSLTEDMAALMLQN, SLEVVSLARNTLMRLDDSVFEG, RLVELDLQRNYIFEIEGGAFDG, ELRRLNLAYNNLPCIVDFSLTQ, LRFLNVSYNILE, ELEILDLSHNQLLFFPLLPQCG, and KLHTLLLQDNSMGFYRELYNTS. A glycan (N-linked (GlcNAc...) asparagine) is linked at Asn-74. Residue Asn-155 is glycosylated (N-linked (GlcNAc...) asparagine). Asn-232 is a glycosylation site (N-linked (GlcNAc...) asparagine). Asn-292, Asn-309, and Asn-312 each carry an N-linked (GlcNAc...) asparagine glycan. LRR repeat units lie at residues 329-350, 353-374, 377-398, 403-424, 427-448, 463-484, 486-507, 512-533, 537-558, 559-580, and 585-605; these read ALRFLDMSQNQLRHLPDGFLKK, SLSHLNLNQNCLTKLHIREHEP, ALTELDLSRNQLAELHLAPGLT, NLRVFNLSSNQLLGVPTGLFHS, SITTLDMSHNQISLCPQTVPLD, SLRSLSLDGCGLKALQDCPFQG, SLTHLDLSSNWGILNGSVSPLS, TLQVLSLRNVGLGSGAAEMDFS, NLRELDLSGNSLTSFPKFKGSS, ALQTLDLRRNSLTALPQRVVSE, and GLQTIYLSQNPYDCCGVEGWG. An N-linked (GlcNAc...) asparagine glycan is attached at Asn-408. Asn-500 carries an N-linked (GlcNAc...) asparagine glycan. Residues 606–643 enclose the LRRCT domain; sequence ALQHFKTIADLSMVTCNLSSKIIRVVELPEGIPQDCKW. N-linked (GlcNAc...) asparagine glycosylation is present at Asn-622. A helical membrane pass occupies residues 651–671; the sequence is FYLVLILPSCLTLLVASTVIF. Residues 672 to 692 lie on the Cytoplasmic side of the membrane; that stretch reads LTFKKPLLQVIKSRCHWSSIY.

Belongs to the LRRC32/LRRC33 family. Interacts (via LRR repeats) with TLR2, TLR3, TLR4, TLR9 and probably other Toll-like receptors. Interacts with CYBB/NOX2; the interaction is direct. Interacts with TGFB1; associates via disulfide bonds with the Latency-associated peptide chain (LAP) regulatory chain of TGFB1, leading to regulate activation of TGF-beta-1.

The protein localises to the cell membrane. It localises to the endoplasmic reticulum membrane. Key regulator of transforming growth factor beta-1 (TGFB1) specifically required for microglia function in the nervous system. Required for activation of latent TGF-beta-1 in macrophages and microglia: associates specifically via disulfide bonds with the Latency-associated peptide (LAP), which is the regulatory chain of TGFB1, and regulates integrin-dependent activation of TGF-beta-1. TGF-beta-1 activation mediated by LRRC33/NRROS is highly localized: there is little spreading of TGF-beta-1 activated from one microglial cell to neighboring microglia, suggesting the existence of localized and selective activation of TGF-beta-1 by LRRC33/NRROS. Indirectly plays a role in Toll-like receptor (TLR) signaling: ability to inhibit TLR-mediated NF-kappa-B activation and cytokine production is probably a consequence of its role in TGF-beta-1 signaling. In Rattus norvegicus (Rat), this protein is Transforming growth factor beta activator LRRC33.